The primary structure comprises 101 residues: uncharacterized protein (101 aa).

Residues 1-11 show a composition bias toward basic and acidic residues; that stretch reads MSDEGYRELVE. The disordered stretch occupies residues 1 to 26; the sequence is MSDEGYRELVESKSAPTTPGPWSPDR.

This is an uncharacterized protein from Torque teno canis virus (isolate Cf-TTV10).